Here is a 590-residue protein sequence, read N- to C-terminus: CTP synthase (590 aa).

An amidoligase domain region spans residues 1–278 (MRKHPQSATK…DAFVVRRLNL (278 aa)). Serine 20 contacts CTP. A UTP-binding site is contributed by serine 20. ATP-binding positions include 21–26 (SLGKGL) and aspartate 78. Mg(2+)-binding residues include aspartate 78 and glutamate 152. CTP contacts are provided by residues 159-161 (DIE), 199-204 (KTKPTQ), and lysine 235. UTP-binding positions include 199–204 (KTKPTQ) and lysine 235. One can recognise a Glutamine amidotransferase type-1 domain in the interval 303-551 (RIALVGKYVD…VGAAIDYKSA (249 aa)). Glycine 366 lines the L-glutamine pocket. Cysteine 393 serves as the catalytic Nucleophile; for glutamine hydrolysis. L-glutamine is bound by residues 394 to 397 (LGLQ), glutamate 416, and arginine 477. Catalysis depends on residues histidine 524 and glutamate 526. Residues 566–590 (EHLPNSSNQHRDGVERSFPAPAARG) form a disordered region.

Belongs to the CTP synthase family. Homotetramer.

It carries out the reaction UTP + L-glutamine + ATP + H2O = CTP + L-glutamate + ADP + phosphate + 2 H(+). It catalyses the reaction L-glutamine + H2O = L-glutamate + NH4(+). The catalysed reaction is UTP + NH4(+) + ATP = CTP + ADP + phosphate + 2 H(+). Its pathway is pyrimidine metabolism; CTP biosynthesis via de novo pathway; CTP from UDP: step 2/2. With respect to regulation, allosterically activated by GTP, when glutamine is the substrate; GTP has no effect on the reaction when ammonia is the substrate. The allosteric effector GTP functions by stabilizing the protein conformation that binds the tetrahedral intermediate(s) formed during glutamine hydrolysis. Inhibited by the product CTP, via allosteric rather than competitive inhibition. Its function is as follows. Catalyzes the ATP-dependent amination of UTP to CTP with either L-glutamine or ammonia as the source of nitrogen. Regulates intracellular CTP levels through interactions with the four ribonucleotide triphosphates. This Mycobacterium leprae (strain Br4923) protein is CTP synthase.